The sequence spans 322 residues: Ribose-phosphate pyrophosphokinase (322 aa).

Residues 43 to 45 (DGE) and 102 to 103 (RQ) contribute to the ATP site. Mg(2+) is bound by residues His137 and Asp177. The active site involves Lys201. Residues Arg203, Asp227, and 231 to 235 (DTAGT) each bind D-ribose 5-phosphate.

Belongs to the ribose-phosphate pyrophosphokinase family. Class I subfamily. As to quaternary structure, homohexamer. Mg(2+) is required as a cofactor.

The protein resides in the cytoplasm. The catalysed reaction is D-ribose 5-phosphate + ATP = 5-phospho-alpha-D-ribose 1-diphosphate + AMP + H(+). It participates in metabolic intermediate biosynthesis; 5-phospho-alpha-D-ribose 1-diphosphate biosynthesis; 5-phospho-alpha-D-ribose 1-diphosphate from D-ribose 5-phosphate (route I): step 1/1. Involved in the biosynthesis of the central metabolite phospho-alpha-D-ribosyl-1-pyrophosphate (PRPP) via the transfer of pyrophosphoryl group from ATP to 1-hydroxyl of ribose-5-phosphate (Rib-5-P). The chain is Ribose-phosphate pyrophosphokinase from Xylella fastidiosa (strain 9a5c).